A 233-amino-acid chain; its full sequence is Ribose-5-phosphate isomerase A (233 aa).

Residues 28–31, 85–88, and 98–101 contribute to the substrate site; these read TGST, DGAD, and KGLG. Glutamate 107 serves as the catalytic Proton acceptor. Residue lysine 125 coordinates substrate.

Belongs to the ribose 5-phosphate isomerase family. As to quaternary structure, homodimer.

The catalysed reaction is aldehydo-D-ribose 5-phosphate = D-ribulose 5-phosphate. The protein operates within carbohydrate degradation; pentose phosphate pathway; D-ribose 5-phosphate from D-ribulose 5-phosphate (non-oxidative stage): step 1/1. In terms of biological role, catalyzes the reversible conversion of ribose-5-phosphate to ribulose 5-phosphate. The sequence is that of Ribose-5-phosphate isomerase A from Roseiflexus sp. (strain RS-1).